A 111-amino-acid chain; its full sequence is Disintegrin lebein-1-alpha (111 aa).

The signal sequence occupies residues 1-20; it reads MIQVLLVTICLAVFPYQGSS. A propeptide spanning residues 21–47 is cleaved from the precursor; sequence IILESGNVNDYEIVYPKKVTVLPTGAM. The Disintegrin domain occupies 47–111; it reads MNSGNPCCDP…SDCPRNPYKD (65 aa). 4 disulfide bridges follow: cysteine 53–cysteine 76, cysteine 67–cysteine 73, cysteine 72–cysteine 97, and cysteine 85–cysteine 104. The Cell attachment site signature appears at 89–91; the sequence is RGD.

The protein belongs to the disintegrin family. Dimeric disintegrin subfamily. In terms of assembly, heterodimer with subunit beta; disulfide-linked. In terms of tissue distribution, expressed by the venom gland.

It localises to the secreted. Functionally, strongly inhibits ADP-induced platelet aggregation on human platelet-rich plasma. Also avidly binds to the laminin-binding beta-1 integrins (alpha-3/beta-1, alpha-6/beta-1, and alpha-7/beta-1) in an RGD-independent manner. This chain is Disintegrin lebein-1-alpha, found in Macrovipera lebetinus (Levantine viper).